Reading from the N-terminus, the 337-residue chain is MTLQIGVIGCGAIGQDHIRRLTRTLSGARVVAVTDIDPTQAHAAVANHGLNAEVYANGGDLIEAPDVQAVLVTSWGPTHEEFVLKAIAQGKPVFCEKPLAVTADGCMRIVAAEQAHGSRLVQVGFMRPYDAGYRALKQVIDSGTIGAPLMLHCAHRNPSVGDRYMTDMAITDTLIHELDVLRWLTGDDYVSAQVVYPRKTRHASSHLADPQIVLLETAQGVRIDVEIFVNCQYGYDIQCEVVGENGIATLPDPQAVSLKHAARHAIAILTDWKDRFIAAYDIELQAFIDGVQGGALTGPSAWDGYAAAVAADACVRAQKSGAIERIEMAARPAFYRG.

This sequence belongs to the Gfo/Idh/MocA family. As to quaternary structure, homotetramer.

The catalysed reaction is myo-inositol + NAD(+) = scyllo-inosose + NADH + H(+). Functionally, involved in the oxidation of myo-inositol (MI) to 2-keto-myo-inositol (2KMI or 2-inosose). This chain is Inositol 2-dehydrogenase, found in Ralstonia nicotianae (strain ATCC BAA-1114 / GMI1000) (Ralstonia solanacearum).